A 21-amino-acid chain; its full sequence is thr operon leader peptide (21 aa).

This sequence belongs to the thr operon leader peptide family.

This protein is involved in control of the biosynthesis of threonine. The chain is thr operon leader peptide from Salmonella choleraesuis (strain SC-B67).